The primary structure comprises 388 residues: Succinate--CoA ligase [ADP-forming] subunit beta (388 aa).

The region spanning 9 to 244 is the ATP-grasp domain; sequence KQIFAEYQLP…PSQEDPREAL (236 aa). ATP is bound by residues K46, 53-55, E99, S102, and E107; that span reads GRG. N199 and D213 together coordinate Mg(2+). Residues N264 and 321–323 contribute to the substrate site; that span reads GIV.

The protein belongs to the succinate/malate CoA ligase beta subunit family. In terms of assembly, heterotetramer of two alpha and two beta subunits. Mg(2+) is required as a cofactor.

The catalysed reaction is succinate + ATP + CoA = succinyl-CoA + ADP + phosphate. The enzyme catalyses GTP + succinate + CoA = succinyl-CoA + GDP + phosphate. It participates in carbohydrate metabolism; tricarboxylic acid cycle; succinate from succinyl-CoA (ligase route): step 1/1. In terms of biological role, succinyl-CoA synthetase functions in the citric acid cycle (TCA), coupling the hydrolysis of succinyl-CoA to the synthesis of either ATP or GTP and thus represents the only step of substrate-level phosphorylation in the TCA. The beta subunit provides nucleotide specificity of the enzyme and binds the substrate succinate, while the binding sites for coenzyme A and phosphate are found in the alpha subunit. This Pasteurella multocida (strain Pm70) protein is Succinate--CoA ligase [ADP-forming] subunit beta.